The sequence spans 526 residues: Peptide chain release factor 3 (526 aa).

The tr-type G domain occupies 9 to 277 (DKRRTFAIIS…GIVEWAPKPL (269 aa)). Residues 18–25 (SHPDAGKT), 86–90 (DTPGH), and 140–143 (NKCD) contribute to the GTP site.

This sequence belongs to the TRAFAC class translation factor GTPase superfamily. Classic translation factor GTPase family. PrfC subfamily.

Its subcellular location is the cytoplasm. Increases the formation of ribosomal termination complexes and stimulates activities of RF-1 and RF-2. It binds guanine nucleotides and has strong preference for UGA stop codons. It may interact directly with the ribosome. The stimulation of RF-1 and RF-2 is significantly reduced by GTP and GDP, but not by GMP. The sequence is that of Peptide chain release factor 3 from Shewanella frigidimarina (strain NCIMB 400).